The primary structure comprises 184 residues: Phosphodiesterase YfcE (184 aa).

Residues Asp9, His11, Asp37, Asn73, His105, His127, and His129 each contribute to the Mn(2+) site.

Belongs to the metallophosphoesterase superfamily. YfcE family. The cofactor is Mn(2+).

Functionally, shows phosphodiesterase activity. The chain is Phosphodiesterase YfcE (yfcE) from Escherichia coli O157:H7.